The following is a 339-amino-acid chain: Cilia- and flagella-associated protein 36 (339 aa).

Coiled-coil stretches lie at residues 142–188 and 255–330; these read ISDL…ENKQ and NLSQ…EVIL. Disordered stretches follow at residues 177–212 and 281–318; these read NLTL…EKQP and KKQE…QRRK. Positions 187 to 200 are enriched in polar residues; that stretch reads KQSSGSERTPNNTE. A compositionally biased stretch (basic and acidic residues) spans 281 to 313; sequence KKQESKKMAQNSEEHEEKATCSKQEMTEEEKKS.

Belongs to the CFAP36 family.

The protein localises to the nucleus. It localises to the cytoplasm. The protein resides in the cell projection. It is found in the cilium. Its subcellular location is the flagellum. The sequence is that of Cilia- and flagella-associated protein 36 from Xenopus tropicalis (Western clawed frog).